The chain runs to 84 residues: Beta-mammal toxin Cn2 (84 aa).

An N-terminal signal peptide occupies residues 1-16 (LLIITACLALIGTVWA). The 66-residue stretch at 17-82 (KEGYLVDKNT…VWPLPNKRCS (66 aa)) folds into the LCN-type CS-alpha/beta domain. 4 disulfide bridges follow: C28–C81, C32–C57, C41–C62, and C45–C64. At S82 the chain carries Serine amide.

Belongs to the long (4 C-C) scorpion toxin superfamily. Sodium channel inhibitor family. Beta subfamily. In terms of tissue distribution, expressed by the venom gland.

The protein localises to the secreted. Its function is as follows. Mammal beta-toxins bind voltage-independently at site-4 of sodium channels (Nav) and shift the activation voltage to more negative potentials. This toxin is active against mammals. The polypeptide is Beta-mammal toxin Cn2 (Centruroides noxius (Mexican scorpion)).